A 380-amino-acid chain; its full sequence is MGAAAAEAPLRLPAAPPLAFCCYTSVLLLFAFSLPGSRASNQPPGGGGGSGGDCPGGKGKSINCSELNVRESDVRVCDESSCKYGGVCKEDGDGLKCACQFQCHTNYIPVCGSNGDTYQNECFLRRAACKHQKEITVIARGPCYSDNGSGSGEGEEEGSGAEVHRKHSKCGPCKYKAECDEDAENVGCVCNIDCSGYSFNPVCASDGSSYNNPCFVREASCIKQEQIDIRHLGHCTDTDDTSLLGKKDDGLQYRPDVKDASDQREDVYIGNHMPCPENLNGYCIHGKCEFIYSTQKASCRCESGYTGQHCEKTDFSILYVVPSRQKLTHVLIAAIIGAVQIAIIVAIVMCITRKCPKNNRGRRQKQNLGHFTSDTSSRMV.

A signal peptide spans 1-39; sequence MGAAAAEAPLRLPAAPPLAFCCYTSVLLLFAFSLPGSRA. Topologically, residues 40-330 are extracellular; the sequence is SNQPPGGGGG…VPSRQKLTHV (291 aa). 2 Kazal-like domains span residues 98–145 and 189–237; these read ACQF…PCYS and VCNI…HCTD. 9 disulfide bridges follow: Cys99-Cys129, Cys103-Cys122, Cys111-Cys143, Cys190-Cys221, Cys194-Cys214, Cys203-Cys235, Cys275-Cys288, Cys283-Cys299, and Cys301-Cys310. Residues 271-311 enclose the EGF-like domain; that stretch reads NHMPCPENLNGYCIHGKCEFIYSTQKASCRCESGYTGQHCE. The chain crosses the membrane as a helical span at residues 331 to 351; it reads LIAAIIGAVQIAIIVAIVMCI. Residues 352–380 are Cytoplasmic-facing; it reads TRKCPKNNRGRRQKQNLGHFTSDTSSRMV. The disordered stretch occupies residues 359-380; that stretch reads NRGRRQKQNLGHFTSDTSSRMV. Over residues 366-380 the composition is skewed to polar residues; the sequence is QNLGHFTSDTSSRMV.

It belongs to the tomoregulin family. May interact with ST14. As to expression, expressed predominantly in brain, and at lower levels in heart, placenta and skeletal muscle. Down-regulated in brain tumors as compared to control brain tissues.

It is found in the cell membrane. Its function is as follows. Neuron-specific restriction factor that prevents herpes simplex virus 1 (HHV-1) infection in the brain by blocking viral entry. Also able to restrict herpes simplex virus 2 (HHV-2) infection, although to a lesser extent. Acts by preventing the association between the viral glycoprotein D (gD) and its cell surface receptor NECTIN1, thereby inhibiting fusion of the virus and the cell membrane. Also able to prevent the association between the viral glycoprotein B (gB) and MYH9/NMMHC-IIA and MYH10/NMMHC-IIB receptors. May be a tumor suppressor in brain cancers. This is Tomoregulin-1 from Homo sapiens (Human).